The sequence spans 423 residues: GPI mannosyltransferase 2 (423 aa).

9 helical membrane-spanning segments follow: residues 11–31 (ILSLTSIFAAWKSFLLAIALG), 106–126 (WEALVAIAISHVSHLVAVLAL), 139–159 (LAYLASVVHVLSPAGLFISAP), 160–180 (YAESPFACMSFVGNLLYAISL), 197–219 (GLSYGISCTLRSNGLFGGVLFAV), 240–260 (LVAPLIGGILVAVGFVAPQVL), 299–319 (YWTPNQIPLFLLAAPMLTILL), 351–371 (LAAIQTLLAVLAITNYHVQII), and 400–420 (GVIVFITMYAAIQGGLFASFL).

It belongs to the PIGV family.

It is found in the endoplasmic reticulum membrane. The protein operates within glycolipid biosynthesis; glycosylphosphatidylinositol-anchor biosynthesis. Its function is as follows. Mannosyltransferase involved in glycosylphosphatidylinositol-anchor biosynthesis. Transfers the second mannose to the glycosylphosphatidylinositol during GPI precursor assembly. This chain is GPI mannosyltransferase 2 (GPI18), found in Gibberella zeae (strain ATCC MYA-4620 / CBS 123657 / FGSC 9075 / NRRL 31084 / PH-1) (Wheat head blight fungus).